The sequence spans 83 residues: ATP synthase subunit c, chloroplastic (83 aa).

The next 2 helical transmembrane spans lie at 4–24 (IISA…AIGP) and 57–77 (LAFM…LLFA).

The protein belongs to the ATPase C chain family. In terms of assembly, F-type ATPases have 2 components, F(1) - the catalytic core - and F(0) - the membrane proton channel. F(1) has five subunits: alpha(3), beta(3), gamma(1), delta(1), epsilon(1). F(0) has four main subunits: a(1), b(1), b'(1) and c(10-14). The alpha and beta chains form an alternating ring which encloses part of the gamma chain. F(1) is attached to F(0) by a central stalk formed by the gamma and epsilon chains, while a peripheral stalk is formed by the delta, b and b' chains.

The protein resides in the plastid. It localises to the chloroplast thylakoid membrane. In terms of biological role, f(1)F(0) ATP synthase produces ATP from ADP in the presence of a proton or sodium gradient. F-type ATPases consist of two structural domains, F(1) containing the extramembraneous catalytic core and F(0) containing the membrane proton channel, linked together by a central stalk and a peripheral stalk. During catalysis, ATP synthesis in the catalytic domain of F(1) is coupled via a rotary mechanism of the central stalk subunits to proton translocation. Functionally, key component of the F(0) channel; it plays a direct role in translocation across the membrane. A homomeric c-ring of between 10-14 subunits forms the central stalk rotor element with the F(1) delta and epsilon subunits. In Galdieria sulphuraria (Red alga), this protein is ATP synthase subunit c, chloroplastic.